A 1656-amino-acid chain; its full sequence is Probable phospholipid-transporting ATPase DNF3 (1656 aa).

Residues 1-164 (MGIADGQRRR…PRQLYAQFSK (164 aa)) are Lumenal-facing. The segment at 36-74 (ELEDINESKTFSGSDNNDKDDRDETSGNYAAEEDYEMEE) is disordered. Over residues 51-60 (NNDKDDRDET) the composition is skewed to basic and acidic residues. The chain crosses the membrane as a helical span at residues 165 to 185 (LANTYFFIVAVLQMIPGWSTT). Over 186–451 (GTYTTIIPLC…RTKAPKLQRK (266 aa)) the chain is Cytoplasmic. A helical membrane pass occupies residues 452 to 472 (INMIIVFMVFVVATISLFSYL). Over 473–495 (GHVLHKKKYIDQNKAWYLFQADA) the chain is Lumenal. The chain crosses the membrane as a helical span at residues 496–516 (GVAPTIMSFIIMYNTVIPLSL). Over 517–1157 (YVTMEIIKVV…ISKMNAVSQE (641 aa)) the chain is Cytoplasmic. The 4-aspartylphosphate intermediate role is filled by Asp-566. Residues Asp-566, Lys-567, and Thr-568 each contribute to the ATP site. A Mg(2+)-binding site is contributed by Asp-566. Thr-568 contacts Mg(2+). Ser-627 bears the Phosphoserine mark. Residues Glu-765, Phe-813, Ser-815, Lys-818, Lys-838, Arg-1034, Thr-1035, Thr-1114, Gly-1115, Asp-1116, 1167–1174 (VVVIDGAT), Arg-1202, and Lys-1208 contribute to the ATP site. The helical transmembrane segment at 1158–1178 (VDSGNIAHCVVVIDGATMAMF) threads the bilayer. The Lumenal segment spans residues 1179-1318 (EGNPTYMSVF…MFSGSSLYEP (140 aa)). Asp-1229 is a Mg(2+) binding site. Positions 1232 and 1233 each coordinate ATP. A helical membrane pass occupies residues 1319–1339 (WSLSMFNTLFTSLPVLCIGMF). Over 1340 to 1365 (EKDLKPMTLLTVPELYSYGRLSQGFN) the chain is Cytoplasmic. Residues 1366 to 1386 (WLIFMEWVILATTNSLIITFL) form a helical membrane-spanning segment. Topologically, residues 1387-1395 (NVVMWGMSS) are lumenal. Residues 1396–1416 (LSDNTMYPLGLINFTAIVALI) traverse the membrane as a helical segment. The Cytoplasmic segment spans residues 1417–1432 (NVKSQFVEMHNRNWLA). The chain crosses the membrane as a helical span at residues 1433–1453 (FTSVVLSCGGWLVWCCALPIL). Residues 1454 to 1473 (NNTDQIYDVAYGFYNHFGKD) lie on the Lumenal side of the membrane. A helical membrane pass occupies residues 1474 to 1494 (ITFWCTSLVLALLPITLDIVY). Topologically, residues 1495–1656 (KTFKVMIWPS…IIQARLKDLE (162 aa)) are cytoplasmic. The segment at 1554 to 1576 (PRTNSRASAKTHNSSIYSMSNGN) is disordered.

The protein belongs to the cation transport ATPase (P-type) (TC 3.A.3) family. Type IV subfamily. As to quaternary structure, component of a flippase complex consisting of DNF3 and YNR048W/CRF1. Interacts with YNR048W/CRF1; the interaction is direct and required for proper expression and endoplasmic reticulum (ER) export of either partner. Mg(2+) is required as a cofactor.

The protein resides in the golgi apparatus. It is found in the trans-Golgi network membrane. Its subcellular location is the endosome membrane. It carries out the reaction ATP + H2O + phospholipidSide 1 = ADP + phosphate + phospholipidSide 2.. The catalysed reaction is a 1,2-diacyl-sn-glycero-3-phosphocholine(out) + ATP + H2O = a 1,2-diacyl-sn-glycero-3-phosphocholine(in) + ADP + phosphate + H(+). The enzyme catalyses a 1,2-diacyl-sn-glycero-3-phosphoethanolamine(out) + ATP + H2O = a 1,2-diacyl-sn-glycero-3-phosphoethanolamine(in) + ADP + phosphate + H(+). In terms of biological role, catalytic component of a P4-ATPase flippase complex which catalyzes the hydrolysis of ATP coupled to the transport of phosphatidylcholine and small amounts of phosphatidylethanolamine from the lumen to the cytosolic leaflet of the trans-Golgi network and ensures the maintenance of asymmetric distribution of phospholipids. May be involved in transport from early endosomes to the trans-Golgi network (TGN). The chain is Probable phospholipid-transporting ATPase DNF3 (DNF3) from Saccharomyces cerevisiae (strain ATCC 204508 / S288c) (Baker's yeast).